The primary structure comprises 564 residues: Nucleoprotein (564 aa).

A binding site for the cap structure m7GTP region spans residues 54–236; sequence LRKTKRGEED…VTKDESSINI (183 aa). Mn(2+) contacts are provided by Asp380 and Glu382. Glu390, Cys497, His500, and Cys525 together coordinate Zn(2+). Asp529 contributes to the Mn(2+) binding site.

This sequence belongs to the arenaviridae nucleocapsid protein family. As to quaternary structure, homomultimerizes to form the nucleocapsid. Binds to viral genomic RNA. Interacts with glycoprotein G2. Interacts with protein Z; this interaction probably directs the encapsidated genome to budding sites. Interacts with protein L; this interaction does not interfere with Z-L interaction. Interacts with host IKBKE (via Protein kinase domain); the interaction inhibits IKBKE kinase activity.

The protein localises to the virion. Its subcellular location is the host cytoplasm. Encapsidates the genome, protecting it from nucleases. The encapsidated genomic RNA is termed the nucleocapsid (NC). Serves as template for viral transcription and replication. The increased presence of protein N in host cell does not seem to trigger the switch from transcription to replication as observed in other negative strain RNA viruses. Through the interaction with host IKBKE, strongly inhibits the phosphorylation and nuclear translocation of host IRF3, a protein involved in interferon activation pathway, leading to the inhibition of interferon-beta and IRF3-dependent promoters activation. Also encodes a functional 3'-5' exoribonuclease that degrades preferentially dsRNA substrates and thereby participates in the suppression of interferon induction. The polypeptide is Nucleoprotein (Akodon azarae (Azara's grass mouse)).